Here is a 264-residue protein sequence, read N- to C-terminus: Thymidylate synthase (264 aa).

Position 21 (arginine 21) interacts with dUMP. Histidine 51 lines the (6R)-5,10-methylene-5,6,7,8-tetrahydrofolate pocket. 126 to 127 serves as a coordination point for dUMP; sequence RR. The active-site Nucleophile is cysteine 146. DUMP is bound by residues 166 to 169, asparagine 177, and 207 to 209; these read RSCD and HLY. (6R)-5,10-methylene-5,6,7,8-tetrahydrofolate is bound at residue aspartate 169. Residue serine 263 participates in (6R)-5,10-methylene-5,6,7,8-tetrahydrofolate binding.

Belongs to the thymidylate synthase family. Bacterial-type ThyA subfamily. In terms of assembly, homodimer.

Its subcellular location is the cytoplasm. It carries out the reaction dUMP + (6R)-5,10-methylene-5,6,7,8-tetrahydrofolate = 7,8-dihydrofolate + dTMP. It functions in the pathway pyrimidine metabolism; dTTP biosynthesis. Catalyzes the reductive methylation of 2'-deoxyuridine-5'-monophosphate (dUMP) to 2'-deoxythymidine-5'-monophosphate (dTMP) while utilizing 5,10-methylenetetrahydrofolate (mTHF) as the methyl donor and reductant in the reaction, yielding dihydrofolate (DHF) as a by-product. This enzymatic reaction provides an intracellular de novo source of dTMP, an essential precursor for DNA biosynthesis. This Buchnera aphidicola subsp. Acyrthosiphon pisum (strain APS) (Acyrthosiphon pisum symbiotic bacterium) protein is Thymidylate synthase.